Reading from the N-terminus, the 360-residue chain is Phospho-N-acetylmuramoyl-pentapeptide-transferase (360 aa).

The next 10 membrane-spanning stretches (helical) occupy residues 18 to 38 (VFSY…FLSL), 72 to 92 (PTMG…MWAY), 94 to 114 (SNPY…VGFV), 132 to 152 (WKYF…YAVG), 168 to 188 (IMPQ…VGTS), 199 to 219 (GLAI…AWAT), 236 to 256 (AGEL…FLWF), 263 to 283 (VFMG…IAVL), 288 to 308 (FLLL…ILQV), and 338 to 358 (VIVR…ATLK).

The protein belongs to the glycosyltransferase 4 family. MraY subfamily. Requires Mg(2+) as cofactor.

The protein resides in the cell inner membrane. It carries out the reaction UDP-N-acetyl-alpha-D-muramoyl-L-alanyl-gamma-D-glutamyl-meso-2,6-diaminopimeloyl-D-alanyl-D-alanine + di-trans,octa-cis-undecaprenyl phosphate = di-trans,octa-cis-undecaprenyl diphospho-N-acetyl-alpha-D-muramoyl-L-alanyl-D-glutamyl-meso-2,6-diaminopimeloyl-D-alanyl-D-alanine + UMP. The protein operates within cell wall biogenesis; peptidoglycan biosynthesis. Its function is as follows. Catalyzes the initial step of the lipid cycle reactions in the biosynthesis of the cell wall peptidoglycan: transfers peptidoglycan precursor phospho-MurNAc-pentapeptide from UDP-MurNAc-pentapeptide onto the lipid carrier undecaprenyl phosphate, yielding undecaprenyl-pyrophosphoryl-MurNAc-pentapeptide, known as lipid I. This chain is Phospho-N-acetylmuramoyl-pentapeptide-transferase, found in Serratia proteamaculans (strain 568).